Here is a 139-residue protein sequence, read N- to C-terminus: Type II methyltransferase M.AquIB (139 aa).

The SAM-dependent MTase C5-type domain occupies 1 to 135 (MDIKNVHIKN…KAVSEQLLDV (135 aa)). The interval 38–58 (KTFGSTYRRLDPNQPSPTVTR) is disordered.

Belongs to the class I-like SAM-binding methyltransferase superfamily. C5-methyltransferase family. As to quaternary structure, heterodimer of an alpha and a beta subunit.

The catalysed reaction is a 2'-deoxycytidine in DNA + S-adenosyl-L-methionine = a 5-methyl-2'-deoxycytidine in DNA + S-adenosyl-L-homocysteine + H(+). Functionally, a methylase, recognizes the double-stranded sequence 5'-CYCGRG-3', methylates C-1 on both strands, and protects the DNA from cleavage by the AquI endonuclease. The sequence is that of Type II methyltransferase M.AquIB (aquIMB) from Picosynechococcus sp. (strain ATCC 27264 / PCC 7002 / PR-6) (Agmenellum quadruplicatum).